The chain runs to 226 residues: ATP synthase F(0) complex subunit a (226 aa).

The next 6 helical transmembrane spans lie at 6-26, 68-88, 97-117, 138-158, 164-184, and 193-213; these read FAPFITPTVLGISVLPLIMIF, WTLMLITLIIFIASTNLLGLL, QLSMNMGMAIPLWMGTVLMGF, IPMLIIIETISLFIQPLALAV, ITAGHLLIHLIGSATLALSSI, and FTILFLLTILEFAVALIQAYV.

It belongs to the ATPase A chain family. As to quaternary structure, component of the ATP synthase complex composed at least of ATP5F1A/subunit alpha, ATP5F1B/subunit beta, ATP5MC1/subunit c (homooctomer), MT-ATP6/subunit a, MT-ATP8/subunit 8, ATP5ME/subunit e, ATP5MF/subunit f, ATP5MG/subunit g, ATP5MK/subunit k, ATP5MJ/subunit j, ATP5F1C/subunit gamma, ATP5F1D/subunit delta, ATP5F1E/subunit epsilon, ATP5PF/subunit F6, ATP5PB/subunit b, ATP5PD/subunit d, ATP5PO/subunit OSCP. ATP synthase complex consists of a soluble F(1) head domain (subunits alpha(3) and beta(3)) - the catalytic core - and a membrane F(0) domain - the membrane proton channel (subunits c, a, 8, e, f, g, k and j). These two domains are linked by a central stalk (subunits gamma, delta, and epsilon) rotating inside the F1 region and a stationary peripheral stalk (subunits F6, b, d, and OSCP). Interacts with DNAJC30; interaction is direct.

The protein resides in the mitochondrion inner membrane. The enzyme catalyses H(+)(in) = H(+)(out). In terms of biological role, subunit a, of the mitochondrial membrane ATP synthase complex (F(1)F(0) ATP synthase or Complex V) that produces ATP from ADP in the presence of a proton gradient across the membrane which is generated by electron transport complexes of the respiratory chain. ATP synthase complex consist of a soluble F(1) head domain - the catalytic core - and a membrane F(1) domain - the membrane proton channel. These two domains are linked by a central stalk rotating inside the F(1) region and a stationary peripheral stalk. During catalysis, ATP synthesis in the catalytic domain of F(1) is coupled via a rotary mechanism of the central stalk subunits to proton translocation. With the subunit c (ATP5MC1), forms the proton-conducting channel in the F(0) domain, that contains two crucial half-channels (inlet and outlet) that facilitate proton movement from the mitochondrial intermembrane space (IMS) into the matrix. Protons are taken up via the inlet half-channel and released through the outlet half-channel, following a Grotthuss mechanism. This is ATP synthase F(0) complex subunit a from Ornithorhynchus anatinus (Duckbill platypus).